Consider the following 813-residue polypeptide: Enhancer of polycomb homolog 1 (813 aa).

Disordered stretches follow at residues 310-403, 484-513, and 528-577; these read FKHQ…PFAF, MLSS…SKDL, and FRPR…SSGS. Over residues 311 to 333 the composition is skewed to basic and acidic residues; the sequence is KHQDATDSKEFKVNKQDKADLIR. Lys-319 participates in a covalent cross-link: Glycyl lysine isopeptide (Lys-Gly) (interchain with G-Cter in SUMO2). The span at 346 to 361 shows a compositional bias: low complexity; sequence PPSAAAPQQQSPAALP. Residues 486 to 513 are compositionally biased toward polar residues; the sequence is SSPQPSPVNQFANTSEPNTSDRSSSKDL. A Phosphoserine modification is found at Ser-538. Positions 564–577 are enriched in low complexity; that stretch reads TCSTSTQNRSSSGS. Lys-650 is covalently cross-linked (Glycyl lysine isopeptide (Lys-Gly) (interchain with G-Cter in SUMO2)). Residues 779 to 813 form a disordered region; it reads VPSSSSVDSVPRENHESEKPALNNIADNTVAMEVT. A compositionally biased stretch (basic and acidic residues) spans 788 to 797; the sequence is VPRENHESEK.

It belongs to the enhancer of polycomb family. As to quaternary structure, component of the NuA4 histone acetyltransferase complex which contains the catalytic subunit KAT5/TIP60 and the subunits EP400, TRRAP/PAF400, BRD8/SMAP, EPC1, DMAP1/DNMAP1, RUVBL1/TIP49, RUVBL2, ING3, actin, ACTL6A/BAF53A, MORF4L1/MRG15, MORF4L2/MRGX, MRGBP, YEATS4/GAS41, VPS72/YL1 and MEAF6. KAT5/TIP60, EPC1, and ING3 together constitute a minimal HAT complex termed Piccolo NuA4. Component of a NuA4-related complex which contains EP400, TRRAP/PAF400, SRCAP, BRD8/SMAP, EPC1, DMAP1/DNMAP1, RUVBL1/TIP49, RUVBL2, actin, ACTL6A/BAF53A, VPS72 and YEATS4/GAS41. Interacts with TRIM27. Interacts with MBTD1; interaction is direct and promotes recruitment of MBTD1 into the NuA4 histone acetyltransferase complex. In terms of tissue distribution, expressed in adult brain, heart, kidney, liver, lung, skeletal muscle and testis. Expressed in male germ cells, present in round spermatids of steps 1 to 4.

The protein resides in the nucleus. The protein localises to the cytoplasm. Its function is as follows. Component of the NuA4 histone acetyltransferase (HAT) complex, a multiprotein complex involved in transcriptional activation of select genes principally by acetylation of nucleosomal histones H4 and H2A. The NuA4 complex plays a direct role in repair of DNA double-strand breaks (DSBs) by promoting homologous recombination (HR). The NuA4 complex is also required for spermatid development by promoting acetylation of histones: histone acetylation is required for histone replacement during the transition from round to elongating spermatids. In the NuA4 complex, EPC1 is required to recruit MBTD1 into the complex. The chain is Enhancer of polycomb homolog 1 from Mus musculus (Mouse).